A 432-amino-acid chain; its full sequence is MTTTAPAPQVYGGDEVATLVIDTGSSYTRVGYAGEDTPKLVVSTECGLMADEDVEMEDDTSNTTKKLNKYKVGDSANLPLPNMEVLHPLTDGIVADWDAVQNIWEYSLARLNADTKTHPLMLTEPCWNTQANKLKALEIAFESLEVPASYLVKDAVASAFAAGKGNALVLDVGSEVASVTPVIDGLVLYKPARRSQYAGDYLDRQIKKVLVSRGIDLTPRFEIKNKKAVEMGEPPVFTKRELPNVTHSFTDLQVSRILSEFKDSMCQVNDVPLTPEISGEAADRVFEFPTGYSTTFGADRLSTSESLFKPSEYPFDGETVPDTARGLSEMVVDTINASNVDVRAHLANNIVITGGGSLVQGLSDRVSKDVTQALSGLKVRVAAASNQEERRHGAWIGGSVLGSLGSFHQLWVSKQEWQEKGGDYLVEKKRFK.

It belongs to the actin family. ARP4 subfamily. Component of the NuA4 histone acetyltransferase complex, of the INO80 chromatin remodeling complex, and of the SWR1 chromatin remodeling complex.

The protein resides in the nucleus. Chromatin interaction component of the NuA4 histone acetyltransferase complex which is involved in transcriptional activation of selected genes principally by acetylation of nucleosomal histone H4 and H2A. The NuA4 complex is also involved in DNA repair. Is required for NuA4 complex integrity. Component of the SWR1 complex which mediates the ATP-dependent exchange of histone H2A for the H2A variant HZT1 leading to transcriptional regulation of selected genes by chromatin remodeling. Component of the INO80 complex which remodels chromatin by shifting nucleosomes and is involved in DNA repair. The chain is Actin-related protein 4 (ARP4) from Yarrowia lipolytica (strain CLIB 122 / E 150) (Yeast).